A 140-amino-acid polypeptide reads, in one-letter code: Lysozyme c-1 (140 aa).

Residues 1 to 20 form the signal peptide; that stretch reads MKVFSTVLLAIVACCAVAEA. Residues 21–140 form the C-type lysozyme domain; the sequence is KTFGKCELAK…KKLPNVSSCF (120 aa). Disulfide bonds link C26–C139, C47–C128, C81–C94, and C90–C108. Residues E52 and D69 contribute to the active site.

It belongs to the glycosyl hydrolase 22 family. In terms of tissue distribution, expressed in salivary glands and Malpighian tubules.

It catalyses the reaction Hydrolysis of (1-&gt;4)-beta-linkages between N-acetylmuramic acid and N-acetyl-D-glucosamine residues in a peptidoglycan and between N-acetyl-D-glucosamine residues in chitodextrins.. Its function is as follows. Lysozymes have primarily a bacteriolytic function; those in tissues and body fluids are associated with the monocyte-macrophage system and enhance the activity of immunoagents. This is Lysozyme c-1 from Anopheles gambiae (African malaria mosquito).